Here is a 336-residue protein sequence, read N- to C-terminus: Dihydroorotate dehydrogenase (quinone) (336 aa).

FMN contacts are provided by residues 62–66 (AGLDK) and threonine 86. Lysine 66 is a binding site for substrate. 111 to 115 (NRMGF) is a binding site for substrate. Asparagine 139 and asparagine 172 together coordinate FMN. Asparagine 172 contributes to the substrate binding site. Catalysis depends on serine 175, which acts as the Nucleophile. Asparagine 177 contributes to the substrate binding site. Lysine 217 and threonine 245 together coordinate FMN. 246–247 (NT) is a binding site for substrate. FMN is bound by residues glycine 268, glycine 297, and 318-319 (YS).

Belongs to the dihydroorotate dehydrogenase family. Type 2 subfamily. As to quaternary structure, monomer. The cofactor is FMN.

It localises to the cell membrane. It catalyses the reaction (S)-dihydroorotate + a quinone = orotate + a quinol. The protein operates within pyrimidine metabolism; UMP biosynthesis via de novo pathway; orotate from (S)-dihydroorotate (quinone route): step 1/1. In terms of biological role, catalyzes the conversion of dihydroorotate to orotate with quinone as electron acceptor. The sequence is that of Dihydroorotate dehydrogenase (quinone) from Vibrio vulnificus (strain CMCP6).